The chain runs to 461 residues: V-type ATP synthase beta chain (461 aa).

This sequence belongs to the ATPase alpha/beta chains family.

In terms of biological role, produces ATP from ADP in the presence of a proton gradient across the membrane. The V-type beta chain is a regulatory subunit. The protein is V-type ATP synthase beta chain of Streptococcus pneumoniae serotype 19F (strain G54).